The following is a 475-amino-acid chain: Cytosolic non-specific dipeptidase (475 aa).

Position 58 is a phosphoserine (Ser-58). His-99 serves as a coordination point for Mn(2+). Asp-101 is an active-site residue. Asp-132 lines the Mn(2+) pocket. Glu-166 serves as the catalytic Proton acceptor. Residues 166-167 (EE), Asp-195, and His-228 contribute to the substrate site. Glu-167 and Asp-195 together coordinate Mn(2+). Ser-299 is subject to Phosphoserine. The substrate site is built by Thr-330, Arg-343, Ser-417, and His-445. Residue His-445 coordinates Mn(2+).

It belongs to the peptidase M20A family. Homodimer. Mn(2+) serves as cofactor. In terms of tissue distribution, highly expressed in the parafascicular nucleus of the thalamus, tuberomammillary nucleus of the hypothalamus and the mitral cell layer of the olfactory bulb.

It localises to the cytoplasm. The enzyme catalyses Hydrolysis of dipeptides, preferentially hydrophobic dipeptides including prolyl amino acids.. It catalyses the reaction L-threonyl-L-threonine + H2O = 2 L-threonine. The catalysed reaction is L-threonyl-L-serine + H2O = L-threonine + L-serine. It carries out the reaction L-seryl-L-threonine + H2O = L-threonine + L-serine. The enzyme catalyses L-cysteinylglycine + H2O = L-cysteine + glycine. It catalyses the reaction L-alanyl-L-cysteine + H2O = L-cysteine + L-alanine. The catalysed reaction is (S)-lactate + L-phenylalanine = N-[(S)-lactoyl]-L-phenylalanine + H2O. Its activity is regulated as follows. Inhibited by bestatin. Its function is as follows. Catalyzes the peptide bond hydrolysis in dipeptides, displaying a non-redundant activity toward threonyl dipeptides. Mediates threonyl dipeptide catabolism in a tissue-specific way. Has high dipeptidase activity toward cysteinylglycine, an intermediate metabolite in glutathione metabolism. Metabolizes N-lactoyl-amino acids, both through hydrolysis to form lactic acid and amino acids, as well as through their formation by reverse proteolysis. Plays a role in the regulation of cell cycle arrest and apoptosis. The protein is Cytosolic non-specific dipeptidase (Cndp2) of Mus musculus (Mouse).